The following is a 156-amino-acid chain: MSRRHKAEKREINPDPKFGDLVVTKFMNAIMLDGKKSVAENIVYGAFDAVQGKSKQEPLSVFHSALDNIAPHVEVRSRRVGGATYQVPVDVRPERRQALAIRWLIAAARKRNETTMIDRLSGELLDASNNRGSAVKKREDTHKMADANRAFSHYRW.

Belongs to the universal ribosomal protein uS7 family. Part of the 30S ribosomal subunit. Contacts proteins S9 and S11.

In terms of biological role, one of the primary rRNA binding proteins, it binds directly to 16S rRNA where it nucleates assembly of the head domain of the 30S subunit. Is located at the subunit interface close to the decoding center, probably blocks exit of the E-site tRNA. This chain is Small ribosomal subunit protein uS7, found in Rhizobium etli (strain ATCC 51251 / DSM 11541 / JCM 21823 / NBRC 15573 / CFN 42).